The chain runs to 538 residues: Retinoblastoma-binding protein 5 (538 aa).

WD repeat units follow at residues 22–63 (DCIS…KIIS) and 64–103 (AHIH…CDQR). K129 participates in a covalent cross-link: Glycyl lysine isopeptide (Lys-Gly) (interchain with G-Cter in SUMO2). 4 WD repeats span residues 148 to 188 (DDDS…LVAS), 196 to 235 (SNTT…TCGR), 249 to 291 (VNRT…KILH), and 293 to 331 (TRGE…NWSA). T252 carries the post-translational modification Phosphothreonine; by CDK1. The interval 330 to 366 (SAFAPDFKELDENVEYEERESEFDIEDEDKSEPEQTG) is interaction with ASH2L. A compositionally biased stretch (acidic residues) spans 344 to 360 (EYEERESEFDIEDEDKS). The interval 344-377 (EYEERESEFDIEDEDKSEPEQTGADAAEDEEVDV) is disordered. S350 bears the Phosphoserine mark. An interaction with WDR5 region spans residues 371-380 (EDEEVDVTSV). S388 and S389 each carry phosphoserine. The tract at residues 408–538 (VEDPEENPYG…TAGGAISELL (131 aa)) is disordered. Residues 479–490 (SKKKQAGRPKGS) show a composition bias toward basic residues. A compositionally biased stretch (basic and acidic residues) spans 491-510 (KGKEKDSPFKPKLYKGDRGL). A Phosphoserine; by CDK1 modification is found at S497. S525 carries the post-translational modification Phosphoserine.

As to quaternary structure, component of the SET1 complex, at least composed of the catalytic subunit (SETD1A or SETD1B), WDR5, WDR82, RBBP5, ASH2L/ASH2, CXXC1/CFP1, HCFC1 and DPY30. Core component of several methyltransferase-containing complexes including MLL1/MLL, MLL2/3 (also named ASCOM complex) and MLL4/WBP7. Each complex is at least composed of ASH2L, RBBP5, WDR5, DPY30, one or more specific histone methyltransferases (KMT2A/MLL1, KMT2D/MLL2, KMT2C/MLL3 and KMT2B/MLL4), and the facultative components PAGR1, BACC1, CHD8, E2F6, HCFC1, HCFC2, HSP70, INO80C, KDM6A, KANSL1, LAS1L, MAX, MCRS1, MEN1, MGA, MYST1/MOF, NCOA6, PAXIP1/PTIP, PELP1, PHF20, PRP31, RING2, RUVB1/TIP49A, RUVB2/TIP49B, SENP3, TAF1, TAF4, TAF6, TAF7, TAF9, TEX10 and alpha- and beta-tubulin. Component of a histone methylation complex composed of at least ZNF335, RBBP5, ASH2L and WDR5; the complex may have histone H3-specific methyltransferase activity, however does not have specificity for 'Lys-4' of histone H3. Interacts with ZNF335. Interacts with ASH2L; the interaction is direct. Interacts with WDR5; the interaction is direct. Components of the ZNF335-RBBP5-ASH2L-WDR5 histone methylation complex may associate with components of a nuclear receptor-mediated transcription complex to form a complex at least composed of ZNF335, HCFC1, CCAR2, EMSY, MKI67, RBBP5, ASH2L and WDR5. Within this complex interacts with EMSY. Found in a complex with RBBP5, ASH2L, DPY30, KMT2A, KMT2D and WDR5. Interacts with SETD1A. Interacts with WDR82. As to expression, ubiquitously expressed.

It is found in the nucleus. In embryonic stem (ES) cells, plays a crucial role in the differentiation potential, particularly along the neural lineage, regulating gene induction and H3 'Lys-4' methylation at key developmental loci, including that mediated by retinoic acid. Does not affect ES cell self-renewal. Component or associated component of some histone methyltransferase complexes which regulates transcription through recruitment of those complexes to gene promoters. As part of the MLL1/MLL complex, involved in mono-, di- and trimethylation at 'Lys-4' of histone H3. Histone H3 'Lys-4' methylation represents a specific tag for epigenetic transcriptional activation. In association with ASH2L and WDR5, stimulates the histone methyltransferase activities of KMT2A, KMT2B, KMT2C, KMT2D, SETD1A and SETD1B. The sequence is that of Retinoblastoma-binding protein 5 (RBBP5) from Homo sapiens (Human).